The following is a 366-amino-acid chain: MNKVVLLCRPGFEKECAAEITDKAGQREIFGFARVKENAGYVIYECYQPDDGDKLIRELPFSSLIFARQWFVVGELLQHLPPEDRITPIVGMLQGVVEKGGELRVEVADTNESKELLKFCRKFTVPLRAVLRDAGGLANYETPKRPVVHVFFIAPGCCYTGYSYSNNNSPFYMGIPRLKFPADAPSRSTLKLEEAFHVFIPADEWDERLANGMWAVDLGACPGGWTYQLVKRNMWVYSVDNGPMAQSLMDTGQVTWLREDGFKFRPTRSNISWMVCDMVEKPAKVAALMAQWLVNGWCRETIFNLKLPMKKRYEEVSHNLAYIQAQLDEHGINAQIQARQLYHDREEVTVHVRRIWAAVGGRRDER.

Residues Ser-188, 221 to 224 (CPGG), Asp-240, Asp-260, and Asp-277 each bind S-adenosyl-L-methionine. The active-site Proton acceptor is Lys-306.

The protein belongs to the class I-like SAM-binding methyltransferase superfamily. RNA methyltransferase RlmE family. RlmM subfamily. In terms of assembly, monomer.

The protein resides in the cytoplasm. The enzyme catalyses cytidine(2498) in 23S rRNA + S-adenosyl-L-methionine = 2'-O-methylcytidine(2498) in 23S rRNA + S-adenosyl-L-homocysteine + H(+). In terms of biological role, catalyzes the 2'-O-methylation at nucleotide C2498 in 23S rRNA. The sequence is that of Ribosomal RNA large subunit methyltransferase M from Shigella dysenteriae serotype 1 (strain Sd197).